The sequence spans 273 residues: Dermonecrotic toxin LsaSicTox-alphaIB1ai (273 aa).

His-5 is an active-site residue. 2 residues coordinate Mg(2+): Glu-25 and Asp-27. The Nucleophile role is filled by His-41. Cystine bridges form between Cys-45-Cys-51 and Cys-47-Cys-190. Asp-85 serves as a coordination point for Mg(2+).

Belongs to the arthropod phospholipase D family. Class II subfamily. Mg(2+) serves as cofactor. In terms of tissue distribution, expressed by the venom gland.

It localises to the secreted. It carries out the reaction an N-(acyl)-sphingosylphosphocholine = an N-(acyl)-sphingosyl-1,3-cyclic phosphate + choline. The catalysed reaction is an N-(acyl)-sphingosylphosphoethanolamine = an N-(acyl)-sphingosyl-1,3-cyclic phosphate + ethanolamine. The enzyme catalyses a 1-acyl-sn-glycero-3-phosphocholine = a 1-acyl-sn-glycero-2,3-cyclic phosphate + choline. It catalyses the reaction a 1-acyl-sn-glycero-3-phosphoethanolamine = a 1-acyl-sn-glycero-2,3-cyclic phosphate + ethanolamine. Dermonecrotic toxins cleave the phosphodiester linkage between the phosphate and headgroup of certain phospholipids (sphingolipid and lysolipid substrates), forming an alcohol (often choline) and a cyclic phosphate. This toxin acts on sphingomyelin (SM). It may also act on ceramide phosphoethanolamine (CPE), lysophosphatidylcholine (LPC) and lysophosphatidylethanolamine (LPE), but not on lysophosphatidylserine (LPS), and lysophosphatidylglycerol (LPG). It acts by transphosphatidylation, releasing exclusively cyclic phosphate products as second products. Induces dermonecrosis, hemolysis, increased vascular permeability, edema, inflammatory response, and platelet aggregation. The sequence is that of Dermonecrotic toxin LsaSicTox-alphaIB1ai from Loxosceles sabina (Tucson recluse spider).